The sequence spans 596 residues: Endoribonuclease ZC3H12A (596 aa).

Disordered stretches follow at residues 1–48 (MSDP…TSEL) and 97–134 (QALT…EGSD). Positions 10-19 (VQESNPTMSL) are enriched in polar residues. The ubiquitin association domain stretch occupies residues 42–87 (EAPTSELQMKVDFFRKLGYSSSEIHSVLQKLGVQADTNTVLGELVK). Residues 81–150 (VLGELVKHGS…DGSNVAMSHG (70 aa)) are necessary for interaction with TANK. The tract at residues 112 to 281 (GGSTPKPSTL…DKFMPPDDPL (170 aa)) is RNase. The RNase NYN domain maps to 135–290 (LRPVVIDGSN…LGRHGPSLDN (156 aa)). Residues 214–220 (RRVGGKR) form an RNA binding region. Asp226 serves as a coordination point for Mg(2+). Disordered regions lie at residues 278 to 306 (DDPL…KQPC) and 340 to 417 (NALL…PTEW). Residues 301–324 (HRKQPCPYGKKCTYGIKCRFFHPE) form a C3H1-type zinc finger. The necessary for interaction with ZC3H12D stretch occupies residues 301-454 (HRKQPCPYGK…SELWGVRGGS (154 aa)). A Phosphoserine modification is found at Ser344. The segment covering 356–368 (QRPSPASQSSSVS) has biased composition (low complexity). Residues Ser435 and Ser439 each carry the phosphoserine modification. The interval 511–543 (YWSEPYPLPPPTPVLQEPQRPSPGAGGGPWGRV) is disordered. Residues 524–533 (VLQEPQRPSP) show a composition bias toward low complexity.

Belongs to the ZC3H12 family. As to quaternary structure, oligomer. Found in a deubiquitination complex with TANK, USP10 and ZC3H12A; this complex inhibits genotoxic stress- or interleukin-1-beta-mediated NF-kappaB activation by promoting IKBKG or TRAF6 deubiquitination. Interacts with IKBKG; this interaction increases in response to DNA damage. Interacts with TANK; this interaction increases in response to DNA damage and serves as a bridge to anchor both TANK and USP10 into a deubiquitinating complex. Interacts with TRAF6; this interaction increases in response to DNA damage and is stimulated by TANK. Interacts with USP10; this interaction increases in response to DNA damage and serves as a bridge to anchor both TANK and USP10 into a deubiquitinating complex. Interacts with ZC3H12D. Interacts with TNRC6A. Interacts with IKBKB/IKKB. Interacts with IKBKB/IKKB. Interacts with IKBKB/IKKB. Interacts with BTRC; the interaction occurs when ZC3H12A is phosphorylated in a IKBKB/IKKB-dependent manner. Interacts with IRAK1; this interaction increases the interaction between ZC3H12A and IKBKB/IKKB. Interacts with UPF1; this interaction occurs in a mRNA translationally active- and termination-dependent manner and is essential for ZC3H12A-mediated degradation of target mRNAs. Associates with ribosomes. Interacts with ubiquitin. Mg(2+) is required as a cofactor. Post-translationally, proteolytically cleaved between Arg-111 and Arg-214 by MALT1 in activated T-cells; cleavage at Arg-111 is critical for promoting ZC3H12A degradation in response to T-cell receptor (TCR) stimulation, and hence is necessary for prolonging the stability of a set of mRNAs controlling T-cell activation and Th17 cell differentiation. In terms of processing, phosphorylated by IRAK1; phosphorylation is necessary for subsequent phosphorylation by the I-kappa-B-kinase (IKK) complex. Phosphorylated by I-kappa-B-kinases (IKKs) at Ser-435 and Ser-439 upon lipopolysaccharide (LPS) or IL1B stimulation in macrophages through the MyD88-dependent signaling pathway; these phosphorylations promote rapid ubiquitin proteasome-mediated degradation of ZC3H12A in macrophages and hence allows its target mRNAs, such as IL6, to escape from degradation and accumulate during the inflammatory response. Ubiquitinated; ubiquitination is induced in response to interleukin IL1 receptor stimuli in a IKBKB/IKKB and IRAK1-dependent manner, leading to proteasome-mediated degradation. As to expression, expressed in CD4(+) helper T-cells (at protein level). Highly expressed in macrophages. Expressed in lung, lymph nodes, spleen and thymus. Expressed weakly in heart. Expressed weakly in cardiomyocytes (at protein level). Expressed in spleen, lung, intestine, brown adipose tissue and thymus. Weakly expressed in the heart. Weakly expressed in cardiomyocytes.

The protein resides in the nucleus. Its subcellular location is the cytoplasm. It is found in the rough endoplasmic reticulum membrane. The protein localises to the cytoplasmic granule. It localises to the P-body. Its function is as follows. Endoribonuclease involved in various biological functions such as cellular inflammatory response and immune homeostasis, glial differentiation of neuroprogenitor cells, cell death of cardiomyocytes, adipogenesis and angiogenesis. Functions as an endoribonuclease involved in mRNA decay. Modulates the inflammatory response by promoting the degradation of a set of translationally active cytokine-induced inflammation-related mRNAs, such as IL6 and IL12B, during the early phase of inflammation. Prevents aberrant T-cell-mediated immune reaction by degradation of multiple mRNAs controlling T-cell activation, such as those encoding cytokines (IL6 and IL2), cell surface receptors (ICOS, TNFRSF4 and TNFR2) and transcription factor (REL). Inhibits cooperatively with ZC3H12A the differentiation of helper T cells Th17 in lungs. They repress target mRNA encoding the Th17 cell-promoting factors IL6, ICOS, REL, IRF4, NFKBID and NFKBIZ. The cooperation requires RNA-binding by RC3H1 and the nuclease activity of ZC3H12A. Together with RC3H1, destabilizes TNFRSF4/OX40 mRNA by binding to the conserved stem loop structure in its 3'UTR. Self regulates by destabilizing its own mRNA. Cleaves mRNA harboring a stem-loop (SL), often located in their 3'-UTRs, during the early phase of inflammation in a helicase UPF1-dependent manner. Plays a role in the inhibition of microRNAs (miRNAs) biogenesis. Cleaves the terminal loop of a set of precursor miRNAs (pre-miRNAs) important for the regulation of the inflammatory response leading to their degradation, and thus preventing the biosynthesis of mature miRNAs. Also plays a role in promoting angiogenesis in response to inflammatory cytokines by inhibiting the production of antiangiogenic microRNAs via its anti-dicer RNase activity. Affects the overall ubiquitination of cellular proteins. Positively regulates deubiquitinase activity promoting the cleavage at 'Lys-48'- and 'Lys-63'-linked polyubiquitin chains on TNF receptor-associated factors (TRAFs), preventing JNK and NF-kappa-B signaling pathway activation, and hence negatively regulating macrophage-mediated inflammatory response and immune homeostasis. Induces also deubiquitination of the transcription factor HIF1A, probably leading to its stabilization and nuclear import, thereby positively regulating the expression of proangiogenic HIF1A-targeted genes. Involved in a TANK-dependent negative feedback response to attenuate NF-kappaB activation through the deubiquitination of IKBKG or TRAF6 in response to interleukin-1-beta (IL1B) stimulation or upon DNA damage. Prevents stress granules (SGs) formation and promotes macrophage apoptosis under stress conditions, including arsenite-induced oxidative stress, heat shock, and energy deprivation. Plays a role in the regulation of macrophage polarization; promotes IL4-induced polarization of macrophages M1 into anti-inflammatory M2 state. May also act as a transcription factor that regulates the expression of multiple genes involved in inflammatory response, angiogenesis, adipogenesis and apoptosis. Functions as a positive regulator of glial differentiation of neuroprogenitor cells through an amyloid precursor protein (APP)-dependent signaling pathway. Attenuates septic myocardial contractile dysfunction in response to lipopolysaccharide (LPS) by reducing I-kappa-B-kinase (IKK)-mediated NF-kappa-B activation, and hence myocardial pro-inflammatory cytokine production. The sequence is that of Endoribonuclease ZC3H12A from Mus musculus (Mouse).